We begin with the raw amino-acid sequence, 716 residues long: Interleukin-31 receptor subunit alpha (716 aa).

Positions 1–18 (MWTLALWAFSFLCKFSLA) are cleaved as a signal peptide. Residues 19 to 499 (VLPTKPENIS…TNGVRINFKT (481 aa)) are Extracellular-facing. 5 consecutive Fibronectin type-III domains span residues 23 to 115 (KPEN…IAKT), 117 to 211 (PPII…TMEE), 213 to 304 (PHVL…ILRI), 305 to 403 (PDVH…QAYA), and 408 to 502 (PLKG…TLSI). N-linked (GlcNAc...) asparagine glycans are attached at residues Asn-36, Asn-48, and Asn-64. Asn-382 is a glycosylation site (N-linked (GlcNAc...) asparagine). A helical membrane pass occupies residues 500-520 (LSISVFEIVLLTSLVGGGLLL). Residues 521–716 (LSIKTVTFGL…NIPEHSKGEV (196 aa)) lie on the Cytoplasmic side of the membrane. Disordered regions lie at residues 622–641 (EYVT…FKEP) and 648–696 (ASED…LKNS). A compositionally biased stretch (polar residues) spans 670–679 (QPSSSCQSPG).

Belongs to the type I cytokine receptor family. Type 2 subfamily. Heterodimer with OSMR. Interacts with JAK1 and STAT3. N-glycosylated. Expressed in a subset of dorsal root ganglia neurons. Expressed in spinal cord and trigeminal ganglion (at protein level). Expressed in skin, testis, bone marrow and thymus.

The protein localises to the cell membrane. Its subcellular location is the presynaptic cell membrane. The protein resides in the cell projection. It is found in the axon. Functionally, associates with OSMR to form the interleukin-31 receptor which activates STAT3 and to a lower extent STAT1 and STAT5. May function in skin immunity. Mediates IL31-induced itch, probably in a manner dependent on cation channels TRPA1 and TRPV1. Positively regulates numbers and cycling status of immature subsets of myeloid progenitor cells in bone marrow in vivo and enhances myeloid progenitor cell survival in vitro. The chain is Interleukin-31 receptor subunit alpha (Il31ra) from Mus musculus (Mouse).